Here is a 122-residue protein sequence, read N- to C-terminus: Large ribosomal subunit protein uL14 (122 aa).

This sequence belongs to the universal ribosomal protein uL14 family. Part of the 50S ribosomal subunit. Forms a cluster with proteins L3 and L19. In the 70S ribosome, L14 and L19 interact and together make contacts with the 16S rRNA in bridges B5 and B8.

In terms of biological role, binds to 23S rRNA. Forms part of two intersubunit bridges in the 70S ribosome. In Stenotrophomonas maltophilia (strain R551-3), this protein is Large ribosomal subunit protein uL14.